A 256-amino-acid polypeptide reads, in one-letter code: MSSSKHSSVFNYSALFLSLFLQQMDQNSLHHLDSPKIENEYEPDSLYDMLDKLPPLDSLLDMEDLKPNAGLHFQFHYNSFEDFFENIEVDNTIPSDIHLLTQEPYFSSDSSSSSPLAIQNDGLISNVKVEKVTVKKKRNLKKKRQDKLEMSEIKQFFDRPIMKAAKELNVGLTVLKKRCRELGIYRWPHRKLKSLNSLIKNLKNVGMEEEVKNLEEHRFLIEQEPDAELSDGTKKLRQACFKANYKRRKSLGDDYY.

In terms of domain architecture, RWP-RK spans 130–216; the sequence is EKVTVKKKRN…MEEEVKNLEE (87 aa). A coiled-coil region spans residues 190–224; the sequence is RKLKSLNSLIKNLKNVGMEEEVKNLEEHRFLIEQE.

It localises to the nucleus. Functionally, putative transcription factor. This Arabidopsis thaliana (Mouse-ear cress) protein is Protein RKD4 (RKD4).